A 420-amino-acid chain; its full sequence is 2',3'-cyclic-nucleotide 3'-phosphodiesterase (420 aa).

A Phosphoserine modification is found at S9. At Y110 the chain carries Phosphotyrosine. Residues S169, S227, and S239 each carry the phosphoserine modification. The active-site Proton acceptor is H250. Substrate is bound at residue T252. H329 (proton donor) is an active-site residue. Substrate is bound at residue T331. S358 carries the phosphoserine modification. C417 carries the post-translational modification Cysteine methyl ester. C417 carries S-farnesyl cysteine lipidation. A propeptide spans 418-420 (TII) (removed in mature form).

It belongs to the 2H phosphoesterase superfamily. CNPase family. In terms of assembly, exists as monomers and homodimers.

It is found in the membrane. Its subcellular location is the melanosome. It catalyses the reaction a nucleoside 2',3'-cyclic phosphate + H2O = a nucleoside 2'-phosphate + H(+). Functionally, catalyzes the formation of 2'-nucleotide products from 2',3'-cyclic substrates. May participate in RNA metabolism in the myelinating cell, CNP is the third most abundant protein in central nervous system myelin. The chain is 2',3'-cyclic-nucleotide 3'-phosphodiesterase from Mus musculus (Mouse).